Reading from the N-terminus, the 202-residue chain is Large ribosomal subunit protein bL25 (202 aa).

It belongs to the bacterial ribosomal protein bL25 family. CTC subfamily. In terms of assembly, part of the 50S ribosomal subunit; part of the 5S rRNA/L5/L18/L25 subcomplex. Contacts the 5S rRNA. Binds to the 5S rRNA independently of L5 and L18.

This is one of the proteins that binds to the 5S RNA in the ribosome where it forms part of the central protuberance. This Methylococcus capsulatus (strain ATCC 33009 / NCIMB 11132 / Bath) protein is Large ribosomal subunit protein bL25.